The primary structure comprises 212 residues: Uridine kinase (212 aa).

13–20 (GASASGKS) provides a ligand contact to ATP.

This sequence belongs to the uridine kinase family.

It is found in the cytoplasm. The catalysed reaction is uridine + ATP = UMP + ADP + H(+). The enzyme catalyses cytidine + ATP = CMP + ADP + H(+). It participates in pyrimidine metabolism; CTP biosynthesis via salvage pathway; CTP from cytidine: step 1/3. The protein operates within pyrimidine metabolism; UMP biosynthesis via salvage pathway; UMP from uridine: step 1/1. The polypeptide is Uridine kinase (Shewanella baltica (strain OS223)).